Consider the following 260-residue polypeptide: Proteasome subunit alpha (260 aa).

This sequence belongs to the peptidase T1A family. As to quaternary structure, the 20S proteasome core is composed of 14 alpha and 14 beta subunits that assemble into four stacked heptameric rings, resulting in a barrel-shaped structure. The two inner rings, each composed of seven catalytic beta subunits, are sandwiched by two outer rings, each composed of seven alpha subunits. The catalytic chamber with the active sites is on the inside of the barrel. Has a gated structure, the ends of the cylinder being occluded by the N-termini of the alpha-subunits. Is capped at one or both ends by the proteasome regulatory ATPase, PAN.

The protein resides in the cytoplasm. With respect to regulation, the formation of the proteasomal ATPase PAN-20S proteasome complex, via the docking of the C-termini of PAN into the intersubunit pockets in the alpha-rings, triggers opening of the gate for substrate entry. Interconversion between the open-gate and close-gate conformations leads to a dynamic regulation of the 20S proteasome proteolysis activity. In terms of biological role, component of the proteasome core, a large protease complex with broad specificity involved in protein degradation. In Thermococcus sp. (strain JCM 11816 / KS-1), this protein is Proteasome subunit alpha.